A 375-amino-acid polypeptide reads, in one-letter code: Platelet-derived growth factor receptor-like protein (375 aa).

The signal sequence occupies residues 1-21; that stretch reads MKVWLLLGLLLVHEALEDVTG. Positions 22–64 are disordered; the sequence is QHLPKNKRPKEPGENRIKPTNKKVKPKIPKMKDRDSANSAPKT. Residues 40–50 are compositionally biased toward basic residues; that stretch reads PTNKKVKPKIP. The Ig-like C2-type 1 domain occupies 62–159; the sequence is PKTQSIMMQV…GYICRKDEAK (98 aa). A disulfide bridge connects residues Cys96 and Cys143. 2 N-linked (GlcNAc...) asparagine glycosylation sites follow: Asn132 and Asn219. In terms of domain architecture, Ig-like C2-type 2 spans 272–375; it reads PSTTILASSN…TTVATTVEFS (104 aa). Cysteines 293 and 357 form a disulfide.

In terms of assembly, forms a complex composed of PDGFRL, TNK2 and GRB2. As to expression, expressed in colon, lung and liver.

Its subcellular location is the secreted. In Homo sapiens (Human), this protein is Platelet-derived growth factor receptor-like protein (PDGFRL).